Reading from the N-terminus, the 533-residue chain is MDATAFHPSLWGDFFVKYKPPTAPKRGHMTQRAELLKEEVRKTLKAAANQIKNALDLIITLQRLGLDHHYENEISELLRFVYSSSDYDDKDLYVVSLRFYLLRKHGHCVSSDVFTSFKDEEGNFVVDDTKCLLSLYNAAYLRTHGEKVLDEAITFTRRQLEALLLDSLEPALADEVHLTLQTPLFRRLRILEAVNYIPIYGKEAGRNEAILELAKLNFNLAQLIYCEELKEITLWWKQLNVETNLSFIRDRIVECHFWMTGACCEPQYSLSRVIATKMTALITVLDDMMDTYSTTEEAMLLAEAIYRWEESAAELLPGYMKDFYLYLLKTIDSCGDELGPNRSFRTFYLKEMLKVFVRGSSQEIKWRNENYVPKTISEHLEHSGPTVGAFQVACSSFVGMGDNITKESFEWLLTYPELVKSLMNIARLLNDTASTKREQNAGHHVSTVQCYMLKHGTTMDEACDKIKELTEDSWKDMMELYLTPTEHPKLIAQTIVDFARTADYMYKETDGFTFSHTIKDMIAKLFVDPISLF.

Mg(2+) is bound by residues aspartate 286, aspartate 290, asparagine 430, serine 434, and glutamate 438. Positions 286–290 match the DDXXD motif motif; the sequence is DDMMD.

Belongs to the terpene synthase family. The cofactor is Mg(2+). It depends on Co(2+) as a cofactor. Mn(2+) serves as cofactor.

It is found in the cytoplasm. The catalysed reaction is (2E,6E)-farnesyl diphosphate = (E)-beta-farnesene + diphosphate. The protein operates within secondary metabolite biosynthesis; terpenoid biosynthesis. Functionally, sesquiterpene cyclase catalyzing the production of sixfold more beta-farnesene than alpha-bergamotene from farnesyl diphosphate. Involved in indirect defense by producing volatile signals attracting natural enemies of herbivores. The protein is (E)-beta-farnesene synthase of Zea diploperennis (Diploperennial teosinte).